The following is a 453-amino-acid chain: Phosphoglucosamine mutase (453 aa).

Residue Ser110 is the Phosphoserine intermediate of the active site. Mg(2+) is bound by residues Ser110, Asp247, Asp249, and Asp251. Ser110 bears the Phosphoserine mark.

Belongs to the phosphohexose mutase family. It depends on Mg(2+) as a cofactor. Activated by phosphorylation.

It catalyses the reaction alpha-D-glucosamine 1-phosphate = D-glucosamine 6-phosphate. Functionally, catalyzes the conversion of glucosamine-6-phosphate to glucosamine-1-phosphate. This Tropheryma whipplei (strain TW08/27) (Whipple's bacillus) protein is Phosphoglucosamine mutase.